The primary structure comprises 91 residues: Class I hydrophobin E (91 aa).

An N-terminal signal peptide occupies residues 1 to 16; it reads MKFSIAAIALAAVAVA. Disulfide bonds link C30–C72, C42–C64, C43–C55, and C73–C89. The N-linked (GlcNAc...) asparagine glycan is linked to N83.

The protein belongs to the fungal hydrophobin family.

The protein localises to the secreted. The protein resides in the cell wall. Its subcellular location is the vacuole. It is found in the cytoplasmic vesicle. Its function is as follows. Aerial growth, conidiation, and dispersal of filamentous fungi in the environment rely upon a capability of their secreting small amphipathic proteins called hydrophobins (HPBs) with low sequence identity. Class I can self-assemble into an outermost layer of rodlet bundles on aerial cell surfaces, conferring cellular hydrophobicity that supports fungal growth, development and dispersal; whereas Class II form highly ordered films at water-air interfaces through intermolecular interactions but contribute nothing to the rodlet structure. Hyd1E contributes to certain cell wall-related features, such as hydrophobicity but is not involved in cell wall-related events during fungal proliferation in host hemocoel. Does not contribute to conidial hydrophobicity. In Beauveria bassiana (strain ARSEF 2860) (White muscardine disease fungus), this protein is Class I hydrophobin E.